Consider the following 594-residue polypeptide: Solute carrier family 22 member 14 (594 aa).

At 1 to 70 (MAGEENFKEE…EFGTFQQRLV (70 aa)) the chain is on the cytoplasmic side. The helical transmembrane segment at 71 to 91 (ALTFIPSIMSAFFMFADHFVF) threads the bilayer. Residues 92–184 (TAQKPYCNTS…LVCGMETKKD (93 aa)) lie on the Extracellular side of the membrane. Residues Asn99, Asn117, Asn125, and Asn150 are each glycosylated (N-linked (GlcNAc...) asparagine). The chain crosses the membrane as a helical span at residues 185 to 205 (TAQIMFMAGLPIGSLIFRLIT). Residues 206–210 (DKMGR) lie on the Cytoplasmic side of the membrane. The chain crosses the membrane as a helical span at residues 211–231 (YPAILLSLLGLIIFGFGTAFM). The Extracellular segment spans residues 232-235 (NSFH). Residues 236–256 (LYLFFRFGISQSVVGYAISSI) form a helical membrane-spanning segment. At 257–270 (SLATEWLVGEHRAH) the chain is on the cytoplasmic side. Residues 271–291 (AIILGHCFFAVGAVLLTGIAY) form a helical membrane-spanning segment. Residues 292–297 (SLPHWQ) are Extracellular-facing. The chain crosses the membrane as a helical span at residues 298–318 (LLFLVGGILVIPFISYIWILP). The Cytoplasmic portion of the chain corresponds to 319–379 (ESPRWLMMKG…DFCKNRQLCK (61 aa)). Residues 380 to 400 (VTLVMSCVWFTVSYTYFTLSL) form a helical membrane-spanning segment. The Extracellular segment spans residues 401–408 (RMRELGVS). A helical membrane pass occupies residues 409–431 (VHFRHVVPSIMEVPARLCCIFLL). At 432–437 (QQIGRK) the chain is on the cytoplasmic side. Residues 438-458 (WSLAVTLLQAIIWCLLLLFLP) form a helical membrane-spanning segment. The Extracellular portion of the chain corresponds to 459 to 488 (EGEDGLRLKWPRCPATELKSMTILVLMLRE). The chain crosses the membrane as a helical span at residues 489-509 (FSLAATVTVFFLYTAELLPTV). The Cytoplasmic portion of the chain corresponds to 510–512 (LRA). A helical transmembrane segment spans residues 513–533 (TGLGLVSLASVAGAILSLTII). At 534–538 (SQTPS) the chain is on the extracellular side. A helical membrane pass occupies residues 539-559 (LLPIFLCCVLAIVAFSLSSLL). Topologically, residues 560-594 (PETRDQPLSESLNHSSQIRNKVKDMKTKETSSDDV) are cytoplasmic. The interval 566–594 (PLSESLNHSSQIRNKVKDMKTKETSSDDV) is disordered. Residues 567–578 (LSESLNHSSQIR) show a composition bias toward polar residues. The span at 580 to 594 (KVKDMKTKETSSDDV) shows a compositional bias: basic and acidic residues.

The protein belongs to the major facilitator (TC 2.A.1) superfamily. Organic cation transporter (TC 2.A.1.19) family. In terms of tissue distribution, ubiquitous.

It localises to the mitochondrion inner membrane. Its subcellular location is the cell projection. It is found in the cilium. The protein resides in the flagellum membrane. The catalysed reaction is riboflavin(in) = riboflavin(out). In terms of biological role, riboflavin transporter localized at the inner mitochondrial membrane of the spermatozoa midpiece, which is required for male fertility. SLC22A14-mediated riboflavin transport is essential for spermatozoa energy generation and motility: riboflavin is the precursor of FMN and FAD, which are coenzymes of many enzymes in the TCA cycle (the citric acid cycle) in mitochondria. Required for sperm motility and normal sperm flagellar structure. This chain is Solute carrier family 22 member 14, found in Homo sapiens (Human).